Here is a 242-residue protein sequence, read N- to C-terminus: Type III pantothenate kinase (242 aa).

6–13 is an ATP binding site; sequence DIGNSVAK. Substrate-binding positions include tyrosine 86 and 93 to 96; that span reads GMDR. Aspartate 95 (proton acceptor) is an active-site residue. Aspartate 116 provides a ligand contact to K(+). Residue threonine 119 coordinates ATP. Threonine 171 provides a ligand contact to substrate.

It belongs to the type III pantothenate kinase family. Homodimer. The cofactor is NH4(+). It depends on K(+) as a cofactor.

Its subcellular location is the cytoplasm. The enzyme catalyses (R)-pantothenate + ATP = (R)-4'-phosphopantothenate + ADP + H(+). Its pathway is cofactor biosynthesis; coenzyme A biosynthesis; CoA from (R)-pantothenate: step 1/5. Its function is as follows. Catalyzes the phosphorylation of pantothenate (Pan), the first step in CoA biosynthesis. This Phocaeicola vulgatus (strain ATCC 8482 / DSM 1447 / JCM 5826 / CCUG 4940 / NBRC 14291 / NCTC 11154) (Bacteroides vulgatus) protein is Type III pantothenate kinase.